The sequence spans 257 residues: MRVAVSGAAGRMGRLVVKNAVAEGLKVVQAFDINEVGKDAGELAGVGKIGVPIEDDISKLDADVLIDFTTAEAAMKNAEVAAEKGVRVVMGTTGFTDEDRKRLAELAEKVPMIVSPNFSLGVNIFWKIVEYAAKMLYEWDAEIVELHHRHKRDSPSGTALKLAEIIRKVKEEKGIEADLKTCREGISPRESEIGVFGIRGGDVVGEHTVFFFGSGERIELTHRAMSRECFAIGAVRAAKWIAKVDKPGFYTMDDFLE.

NAD(+) is bound by residues 7–12, D32, 91–93, and 115–118; these read GAAGRM, GTT, and SPNF. The active-site Proton donor/acceptor is the H147. Position 148 (H148) interacts with (S)-2,3,4,5-tetrahydrodipicolinate. K151 functions as the Proton donor in the catalytic mechanism. (S)-2,3,4,5-tetrahydrodipicolinate is bound at residue 157–158; that stretch reads GT.

Belongs to the DapB family.

It is found in the cytoplasm. It carries out the reaction (S)-2,3,4,5-tetrahydrodipicolinate + NAD(+) + H2O = (2S,4S)-4-hydroxy-2,3,4,5-tetrahydrodipicolinate + NADH + H(+). The enzyme catalyses (S)-2,3,4,5-tetrahydrodipicolinate + NADP(+) + H2O = (2S,4S)-4-hydroxy-2,3,4,5-tetrahydrodipicolinate + NADPH + H(+). It participates in amino-acid biosynthesis; L-lysine biosynthesis via DAP pathway; (S)-tetrahydrodipicolinate from L-aspartate: step 4/4. Its function is as follows. Catalyzes the conversion of 4-hydroxy-tetrahydrodipicolinate (HTPA) to tetrahydrodipicolinate. This chain is 4-hydroxy-tetrahydrodipicolinate reductase, found in Archaeoglobus fulgidus (strain ATCC 49558 / DSM 4304 / JCM 9628 / NBRC 100126 / VC-16).